The sequence spans 411 residues: Dihydrofolate synthase/folylpolyglutamate synthase (411 aa).

53 to 56 (GKGT) contributes to the ATP binding site. S77 provides a ligand contact to Mg(2+). 7,8-dihydropteroate is bound by residues 116 to 119 (TYFE) and 147 to 149 (LDA). Residue H167 coordinates Mg(2+). The ATP site is built by R283 and D296.

Belongs to the folylpolyglutamate synthase family. Monomer. It depends on Mg(2+) as a cofactor.

The enzyme catalyses 7,8-dihydropteroate + L-glutamate + ATP = 7,8-dihydrofolate + ADP + phosphate + H(+). It carries out the reaction (6S)-5,6,7,8-tetrahydrofolyl-(gamma-L-Glu)(n) + L-glutamate + ATP = (6S)-5,6,7,8-tetrahydrofolyl-(gamma-L-Glu)(n+1) + ADP + phosphate + H(+). The catalysed reaction is 10-formyltetrahydrofolyl-(gamma-L-Glu)(n) + L-glutamate + ATP = 10-formyltetrahydrofolyl-(gamma-L-Glu)(n+1) + ADP + phosphate + H(+). It catalyses the reaction (6R)-5,10-methylenetetrahydrofolyl-(gamma-L-Glu)(n) + L-glutamate + ATP = (6R)-5,10-methylenetetrahydrofolyl-(gamma-L-Glu)(n+1) + ADP + phosphate + H(+). The protein operates within cofactor biosynthesis; tetrahydrofolate biosynthesis; 7,8-dihydrofolate from 2-amino-4-hydroxy-6-hydroxymethyl-7,8-dihydropteridine diphosphate and 4-aminobenzoate: step 2/2. Its pathway is cofactor biosynthesis; tetrahydrofolylpolyglutamate biosynthesis. Functionally, functions in two distinct reactions of the de novo folate biosynthetic pathway. Catalyzes the addition of a glutamate residue to dihydropteroate (7,8-dihydropteroate or H2Pte) to form dihydrofolate (7,8-dihydrofolate monoglutamate or H2Pte-Glu). Also catalyzes successive additions of L-glutamate to tetrahydrofolate or 10-formyltetrahydrofolate or 5,10-methylenetetrahydrofolate, leading to folylpolyglutamate derivatives. This Buchnera aphidicola subsp. Acyrthosiphon pisum (strain APS) (Acyrthosiphon pisum symbiotic bacterium) protein is Dihydrofolate synthase/folylpolyglutamate synthase (folC).